The chain runs to 2151 residues: Calpain-type cysteine protease DEK1 (2151 aa).

Positions 1–32 (MEGDERGVLLACVISGTLFTVFGSGSFWILWA) are cleaved as a signal peptide. At 33–69 (VNWRPWRLYSWIFARKWPKVLQGPQLDILCGVLSLFA) the chain is on the extracellular side. Residues 70 to 90 (WIVVVSPIAILIGWGSWLIVI) form a helical membrane-spanning segment. The Cytoplasmic portion of the chain corresponds to 91 to 94 (LDRH). A helical transmembrane segment spans residues 95 to 115 (IIGLAIIMAGTALLLAFYSIM). At 116-126 (LWWRTQWQSSR) the chain is on the extracellular side. Residues 127–147 (AVALLLLLGVALLCAYELCAV) traverse the membrane as a helical segment. Residues 148 to 163 (YVTAGAHASQQYSPSG) lie on the Cytoplasmic side of the membrane. The helical transmembrane segment at 164–184 (FFFGVSAIALAINMLFICRMV) threads the bilayer. Over 185–235 (FNGNGLDVDEYVRRAYKFAYSDCIEVGPVACLPEPPDPNELYPRQTSRASH) the chain is Extracellular. Residues 236–256 (LGLLYLGSLVVLLAYSVLYGL) traverse the membrane as a helical segment. The Cytoplasmic portion of the chain corresponds to 257–263 (TARESRW). A helical membrane pass occupies residues 264 to 284 (LGGITSAAVIVLDWNIGACLY). At 285–293 (GFKLLQNRV) the chain is on the extracellular side. A helical membrane pass occupies residues 294–314 (LALFVAGISRLFLICFGIHYW). Topologically, residues 315 to 319 (YLGHC) are cytoplasmic. A helical membrane pass occupies residues 320–340 (ISYIFVASVLSGAAVSRHLSI). Residues 341-615 (TDPSAARRDA…LLLHHVAGTP (275 aa)) lie on the Extracellular side of the membrane. Disordered regions lie at residues 363 to 393 (RRKE…GHTG) and 405 to 442 (CTAD…SCRS). Residues 369–388 (SSSSSSDGCGSSIKRSSSID) are compositionally biased toward low complexity. Over residues 405–420 (CTADNLTRTGSSQEGI) the composition is skewed to polar residues. Residues 430–442 (RPSLGLRSSSCRS) are compositionally biased toward low complexity. The helical transmembrane segment at 616–636 (ERAWGLFSLVFILETIIVAIF) threads the bilayer. The Cytoplasmic portion of the chain corresponds to 637–652 (RPKTITIINSSHQQFE). A helical membrane pass occupies residues 653-673 (FGFSVLLLSPVVCSIMAFLRS). Residues 674 to 686 (LQVEEMALTSKSR) are Extracellular-facing. The chain crosses the membrane as a helical span at residues 687-707 (KYGFVAWLLSTSVGLSLSFLS). The Cytoplasmic segment spans residues 708–711 (KSSV). The chain crosses the membrane as a helical span at residues 712–732 (LLGISLTVPLMAACLSIAVPI). Topologically, residues 733–760 (WMHNGYQFWVPQLSCGDQARDLRSPRIK) are extracellular. The chain crosses the membrane as a helical span at residues 761 to 782 (GFILWICVVLFAGSVISLGAII). Residues 783-813 (SAKPLDDLKYKLFSARENNVTSPYTSSVYLG) lie on the Cytoplasmic side of the membrane. A helical membrane pass occupies residues 814-834 (WAMSSGIALVVTAILPIVSWF). Residues 835–844 (ATYRFSHSSA) lie on the Extracellular side of the membrane. A helical transmembrane segment spans residues 845-865 (VCLMIFSVVLVAFCGTSYLEV). Residues 866-878 (VKSRDDQLPTKGD) are Cytoplasmic-facing. The chain crosses the membrane as a helical span at residues 879–899 (FLAALLPLACIPALLSLCCGM). Over 900–912 (VKWKDDCWILSRG) the chain is Extracellular. The chain crosses the membrane as a helical span at residues 913-933 (VYVFFSIGLLLLFGAIAAVIA). Residues 934–936 (VKP) lie on the Cytoplasmic side of the membrane. The helical transmembrane segment at 937–957 (WTIGVSFLLVLFLMVVTIGVI) threads the bilayer. At 958–971 (HLWASNNFYLTRKQ) the chain is on the extracellular side. A helical membrane pass occupies residues 972–992 (TSFVCFLALLLGLAAFLLGWH). The Cytoplasmic portion of the chain corresponds to 993–1006 (QDKAFAGASVGYFT). The chain crosses the membrane as a helical span at residues 1007 to 1027 (FLSLLAGRALAVLLSPPIVVY). The Extracellular portion of the chain corresponds to 1028–1050 (SPRVLPVYVYDAHADCGKNVSAA). Residues 1051–1071 (FLVLYGIALATEGWGVVASLI) traverse the membrane as a helical segment. Residues 1072–2151 (IYPPFAGAAV…TKASIVLEAL (1080 aa)) lie on the Cytoplasmic side of the membrane. Calpain catalytic domains lie at 1407–1600 (SGKH…DMID) and 1695–1997 (QFTD…CRVY). Catalysis depends on residues Cys1761, His1919, and Asn1939.

It belongs to the peptidase C2 family. Post-translationally, autocatalytic proteolytic cleavage leading to the production of mainly cytoplasmic localized subproducts of about 85 and 120 kDa. As to expression, mostly expressed in meristems and organ primordia. Expressed at low levels in young and germinating seeds at 10 ppm and in seedling roots at 67 ppm. Present in most tissues at a low level.

The protein localises to the cell membrane. The protein resides in the endosome membrane. It localises to the endoplasmic reticulum membrane. Its subcellular location is the cytoplasm. Functionally, essential protease involved in epiderm development. Required for aleurone cell development in the endosperm probably by maintaining and restricting the aleurone and embryonic epidermal L1 cell-layer fates as well as meristems organization. Involved in the maintenance of adaxial/abaxial axis information in developing leaves, probably by regulating cell proliferation and expansion. Does not need calcium ions to be active. Required for the formation of giant cells in sepals by determining cell fate and promoting endoreplication. In Arabidopsis thaliana (Mouse-ear cress), this protein is Calpain-type cysteine protease DEK1.